Here is a 1193-residue protein sequence, read N- to C-terminus: Tubulin monoglutamylase TTLL4 (1193 aa).

Disordered stretches follow at residues 1-37 (MASA…EKPS) and 468-535 (VHLD…CSSL). Polar residues predominate over residues 24 to 34 (PSGTVSASPSE). Positions 472–482 (QPGKEPEEAKD) are enriched in basic and acidic residues. The segment covering 502–515 (EPEDTEDELGDGLE) has biased composition (acidic residues). The 344-residue stretch at 599 to 942 (RRLLRWKMST…VLPNMEDIIS (344 aa)) folds into the TTL domain. S686 carries the post-translational modification Phosphoserine. Residues K716, 722–723 (RG), 744–747 (QRYL), and 757–759 (KFD) each bind ATP. R722 is a binding site for a protein. R783 is an L-glutamate binding site. 804–805 (TN) contacts ATP. Residues Y806, S807, and K828 each coordinate L-glutamate. Positions 888, 901, and 903 each coordinate Mg(2+). The c-MTBD region stretch occupies residues 913–1027 (PLDISIKGQM…RGQFERIFPS (115 aa)). K919 is an L-glutamate binding site. Low complexity predominate over residues 943–960 (SSSSPSSSSGSSTSLPSS). Disordered regions lie at residues 943-966 (SSSS…DKCQ) and 1092-1193 (MTTS…AVSS). 2 stretches are compositionally biased toward polar residues: residues 1092 to 1102 (MTTSKGDGTPN) and 1131 to 1153 (SQAG…NTSK). Low complexity predominate over residues 1168–1182 (SGQSSRLSAASASQS). The span at 1183-1193 (VTDSRLTAVSS) shows a compositional bias: polar residues.

It belongs to the tubulin--tyrosine ligase family. Mg(2+) is required as a cofactor. In terms of tissue distribution, highly expressed in testis. Expressed in brain, heart, kidney, liver, lung, muscle and spleen. In the brain, expressed in ependymal cilia, the cortex and the striatum. Expressed in blastomere.

Its subcellular location is the cytoplasm. The protein resides in the cell projection. It is found in the cilium. It localises to the cytoskeleton. The protein localises to the cilium basal body. It carries out the reaction L-glutamyl-[protein] + L-glutamate + ATP = gamma-L-glutamyl-L-glutamyl-[protein] + ADP + phosphate + H(+). Its function is as follows. Monoglutamylase which modifies both tubulin and non-tubulin proteins, adding a single glutamate on the gamma-carboxyl group of specific glutamate residues of target proteins. Involved in the side-chain initiation step of the polyglutamylation reaction but not in the elongation step. Preferentially modifies beta-tail tubulin over the alpha-tubulin. Monoglutamylates nucleosome assembly proteins NAP1L1 and NAP1L4. Monoglutamylates nucleotidyltransferase CGAS, leading to inhibition of CGAS catalytic activity, thereby preventing antiviral defense function. Involved in KLF4 glutamylation which impedes its ubiquitination, thereby leading to somatic cell reprogramming, pluripotency maintenance and embryogenesis. The protein is Tubulin monoglutamylase TTLL4 of Mus musculus (Mouse).